The sequence spans 520 residues: N-acetylgalactosamine-6-sulfatase (520 aa).

A signal peptide spans 1–23; that stretch reads MAACTAAQQLLLVLSALGLLAAG. Residues 24 to 377 are catalytic domain; it reads APQPPNIVLL…PTMLKGQMMD (354 aa). Ca(2+) is bound by residues Asp36, Asp37, and Cys76. The active-site Nucleophile is the Cys76. A 3-oxoalanine (Cys) modification is found at Cys76. The active site involves His139. The N-linked (GlcNAc...) asparagine glycan is linked to Asn201. 2 residues coordinate Ca(2+): Asp286 and Asn287. Residues Cys306 and Cys417 are joined by a disulfide bond. The N-linked (GlcNAc...) asparagine glycan is linked to Asn421. Cystine bridges form between Cys487–Cys516 and Cys499–Cys505.

The protein belongs to the sulfatase family. As to quaternary structure, homodimer. It depends on Ca(2+) as a cofactor. Post-translationally, the conversion to 3-oxoalanine (also known as C-formylglycine, FGly), of a serine or cysteine residue in prokaryotes and of a cysteine residue in eukaryotes, is critical for catalytic activity. Widely expressed. Higher expression in liver and kidney.

The protein resides in the lysosome. The catalysed reaction is Hydrolysis of the 6-sulfate groups of the N-acetyl-D-galactosamine 6-sulfate units of chondroitin sulfate and of the D-galactose 6-sulfate units of keratan sulfate.. The protein is N-acetylgalactosamine-6-sulfatase (Galns) of Mus musculus (Mouse).